A 144-amino-acid chain; its full sequence is Large ribosomal subunit protein uL11 (144 aa).

This sequence belongs to the universal ribosomal protein uL11 family. In terms of assembly, part of the ribosomal stalk of the 50S ribosomal subunit. Interacts with L10 and the large rRNA to form the base of the stalk. L10 forms an elongated spine to which L12 dimers bind in a sequential fashion forming a multimeric L10(L12)X complex. One or more lysine residues are methylated.

In terms of biological role, forms part of the ribosomal stalk which helps the ribosome interact with GTP-bound translation factors. The sequence is that of Large ribosomal subunit protein uL11 from Neisseria meningitidis serogroup C (strain 053442).